A 277-amino-acid chain; its full sequence is Ribosomal RNA small subunit methyltransferase A (277 aa).

S-adenosyl-L-methionine is bound by residues Asn-20, Leu-22, Gly-47, Glu-68, Asp-93, and Asn-114.

This sequence belongs to the class I-like SAM-binding methyltransferase superfamily. rRNA adenine N(6)-methyltransferase family. RsmA subfamily.

Its subcellular location is the cytoplasm. The enzyme catalyses adenosine(1518)/adenosine(1519) in 16S rRNA + 4 S-adenosyl-L-methionine = N(6)-dimethyladenosine(1518)/N(6)-dimethyladenosine(1519) in 16S rRNA + 4 S-adenosyl-L-homocysteine + 4 H(+). Functionally, specifically dimethylates two adjacent adenosines (A1518 and A1519) in the loop of a conserved hairpin near the 3'-end of 16S rRNA in the 30S particle. May play a critical role in biogenesis of 30S subunits. The protein is Ribosomal RNA small subunit methyltransferase A of Aliivibrio salmonicida (strain LFI1238) (Vibrio salmonicida (strain LFI1238)).